Here is an 812-residue protein sequence, read N- to C-terminus: Probable phosphoketolase (812 aa).

Belongs to the XFP family. Thiamine diphosphate serves as cofactor.

This Thermosynechococcus vestitus (strain NIES-2133 / IAM M-273 / BP-1) protein is Probable phosphoketolase.